The following is a 950-amino-acid chain: Glycine dehydrogenase (decarboxylating) (950 aa).

Lys698 is modified (N6-(pyridoxal phosphate)lysine).

It belongs to the GcvP family. The glycine cleavage system is composed of four proteins: P, T, L and H. The cofactor is pyridoxal 5'-phosphate.

It catalyses the reaction N(6)-[(R)-lipoyl]-L-lysyl-[glycine-cleavage complex H protein] + glycine + H(+) = N(6)-[(R)-S(8)-aminomethyldihydrolipoyl]-L-lysyl-[glycine-cleavage complex H protein] + CO2. Functionally, the glycine cleavage system catalyzes the degradation of glycine. The P protein binds the alpha-amino group of glycine through its pyridoxal phosphate cofactor; CO(2) is released and the remaining methylamine moiety is then transferred to the lipoamide cofactor of the H protein. This is Glycine dehydrogenase (decarboxylating) from Neisseria meningitidis serogroup A / serotype 4A (strain DSM 15465 / Z2491).